Here is a 147-residue protein sequence, read N- to C-terminus: Hemoglobin subunit beta-2 (147 aa).

V2 bears the N-acetylvaline mark. The region spanning 3-147 (HLTDAEKSAV…VATALAHKYH (145 aa)) is the Globin domain. Position 18 is an N6-succinyllysine (K18). The residue at position 42 (Y42) is a Phosphotyrosine. Phosphoserine is present on residues S45, S51, and S53. K60 carries the N6-succinyllysine modification. The heme b site is built by H64 and H93. At R105 the chain carries Asymmetric dimethylarginine. T124 is modified (phosphothreonine).

It belongs to the globin family. Heterotetramer of two alpha chains and two beta chains. As to expression, red blood cells.

In terms of biological role, involved in oxygen transport from the lung to the various peripheral tissues. This chain is Hemoglobin subunit beta-2 (Hbb-b2), found in Mus musculus (Mouse).